Reading from the N-terminus, the 210-residue chain is Protein HEADING DATE REPRESSOR 1 (210 aa).

The segment at 1–97 (MEEPASADPP…GKRSSAEMLL (97 aa)) is disordered. A coiled-coil region spans residues 29-49 (QQELNKEAADEQLNNQAHEEA). Basic and acidic residues-rich tracts occupy residues 45 to 54 (AHEEAMKIDD) and 62 to 79 (DDVHPDPKANLSEKRKAL). A coiled-coil region spans residues 129–184 (RRIAIQEMNRKDREINGLNEQLEEDSRVLELLQKQLADERKKRTEIEKENSMLHEQ).

In terms of assembly, interacts with OSK3 and OSK4. In terms of tissue distribution, mostly expressed in leaves, seedlings and floral organs, and, to a lower extent, in panicle, roots, nodes, internodes, leaf joint and sheath.

Its subcellular location is the nucleus. Regulates flowering time via a photoperiod-dependent pathway. Suppressor of flowering that upregulates HD1 and down-regulates EHD1 in long days (LD), thus leading to the down-regulation of HD3A and RFT1. Triggers OSK4-mediated HD1 phosphorylation. This is Protein HEADING DATE REPRESSOR 1 from Oryza sativa subsp. japonica (Rice).